The following is a 339-amino-acid chain: Heat-inducible transcription repressor HrcA (339 aa).

The protein belongs to the HrcA family.

Functionally, negative regulator of class I heat shock genes (grpE-dnaK-dnaJ and groELS operons). Prevents heat-shock induction of these operons. The sequence is that of Heat-inducible transcription repressor HrcA from Nitrosospira multiformis (strain ATCC 25196 / NCIMB 11849 / C 71).